Reading from the N-terminus, the 85-residue chain is UPF0297 protein LGAS_0422 (85 aa).

It belongs to the UPF0297 family.

This Lactobacillus gasseri (strain ATCC 33323 / DSM 20243 / BCRC 14619 / CIP 102991 / JCM 1131 / KCTC 3163 / NCIMB 11718 / NCTC 13722 / AM63) protein is UPF0297 protein LGAS_0422.